Consider the following 418-residue polypeptide: Glutamyl-tRNA reductase (418 aa).

Substrate contacts are provided by residues 49–52, Ser109, 114–116, and Gln120; these read TCNR and EPQ. Residue Cys50 is the Nucleophile of the active site. Position 189–194 (189–194) interacts with NADP(+); the sequence is GAGETI.

It belongs to the glutamyl-tRNA reductase family. In terms of assembly, homodimer.

The enzyme catalyses (S)-4-amino-5-oxopentanoate + tRNA(Glu) + NADP(+) = L-glutamyl-tRNA(Glu) + NADPH + H(+). Its pathway is porphyrin-containing compound metabolism; protoporphyrin-IX biosynthesis; 5-aminolevulinate from L-glutamyl-tRNA(Glu): step 1/2. Its function is as follows. Catalyzes the NADPH-dependent reduction of glutamyl-tRNA(Glu) to glutamate 1-semialdehyde (GSA). This chain is Glutamyl-tRNA reductase, found in Escherichia coli O45:K1 (strain S88 / ExPEC).